A 1010-amino-acid chain; its full sequence is Phosphoenolpyruvate carboxylase (1010 aa).

The segment covering 1–18 (MIMRSPETSGASMPQSTA) has biased composition (polar residues). 2 disordered regions span residues 1-36 (MIMRSPETSGASMPQSTAHVPDGEQPRASGGSPGAG) and 132-154 (LRPSRSQDDETAAPFDPFAPPLA). Residues H195 and K652 contribute to the active site. Residues 967–986 (QNRQPPMSESPGTPEDRRTY) form a disordered region.

This sequence belongs to the PEPCase type 1 family. Mg(2+) is required as a cofactor.

It carries out the reaction oxaloacetate + phosphate = phosphoenolpyruvate + hydrogencarbonate. Functionally, forms oxaloacetate, a four-carbon dicarboxylic acid source for the tricarboxylic acid cycle. This Parasynechococcus marenigrum (strain WH8102) protein is Phosphoenolpyruvate carboxylase.